The chain runs to 369 residues: Caffeine synthase 1 (369 aa).

An S-adenosyl-L-homocysteine-binding site is contributed by Y24. Position 31 (T31) interacts with caffeine. Positions 66, 71, 103, 104, 138, and 139 each coordinate S-adenosyl-L-homocysteine. Residues Y156, H159, and W160 each contribute to the caffeine site. Position 177 (N177) interacts with Mg(2+). R225 contacts caffeine. The Mg(2+) site is built by D263, F265, and N266. Position 321 (F321) interacts with caffeine.

It belongs to the methyltransferase superfamily. Type-7 methyltransferase family. It depends on Mg(2+) as a cofactor.

The catalysed reaction is theobromine + S-adenosyl-L-methionine = caffeine + S-adenosyl-L-homocysteine + H(+). The enzyme catalyses 7-methylxanthine + S-adenosyl-L-methionine = theobromine + S-adenosyl-L-homocysteine + H(+). It functions in the pathway alkaloid biosynthesis. Involved in the biosynthesis of caffeine. Catalyzes the conversion of 7-methylxanthine (7mX) to theobromine and of theobromine to caffeine. This is Caffeine synthase 1 from Camellia taliensis (Wild tea).